Here is a 120-residue protein sequence, read N- to C-terminus: Small ribosomal subunit protein bS16 (120 aa).

Positions Gly81–Ala120 are disordered. The segment covering Glu95–Lys110 has biased composition (basic and acidic residues). The span at Ala111 to Ala120 shows a compositional bias: low complexity.

It belongs to the bacterial ribosomal protein bS16 family.

The chain is Small ribosomal subunit protein bS16 from Methylorubrum extorquens (strain CM4 / NCIMB 13688) (Methylobacterium extorquens).